The primary structure comprises 554 residues: Intraflagellar transport protein 56 (554 aa).

The interval 1 to 27 (MMLSRAKPAVGGESPHTDKRKKKGRKI) is disordered. Residues 18–27 (DKRKKKGRKI) are compositionally biased toward basic residues. TPR repeat units lie at residues 57–90 (EDTNLWIGYCAFHLGDYKRALEEYENAAKEENCN), 92–125 (EVWVNLACTYFFLGMYKQAEAAGFKAPKSRLQNR), 151–184 (KEDQLSLASIHYMRSHYQEAIDIYKRILLDNREY), and 468–501 (ANDCYKMGQFYYSAKAFDVLERLDPNPEYWEGKR).

Belongs to the IFT56 family. In terms of assembly, component of the IFT complex B. Interacts with IFT46; the interaction is direct.

It localises to the cell projection. Its subcellular location is the cilium. Component of the intraflagellar transport (IFT) complex B required for transport of proteins in the motile cilium. Required for transport of specific ciliary cargo proteins related to motility, while it is neither required for IFT complex B assembly or motion nor for cilium assembly. Required for efficient coupling between the accumulation of GLI2 and GLI3 at the ciliary tips and their dissociation from the negative regulator SUFU. Plays a key role in maintaining the integrity of the IFT complex B and the proper ciliary localization of the IFT complex B components. Not required for IFT complex A ciliary localization or function. Essential for maintaining proper microtubule organization within the ciliary axoneme. The sequence is that of Intraflagellar transport protein 56 from Rattus norvegicus (Rat).